A 58-amino-acid polypeptide reads, in one-letter code: U11-myrmicitoxin-Tb1a (58 aa).

Positions 1–24 are excised as a propeptide; it reads LAMAMGDAVADAQARAMAAAYAIA. Cysteines 34 and 57 form a disulfide.

Belongs to the formicidae venom precursor-01 superfamily. In terms of tissue distribution, expressed by the venom gland.

The protein localises to the secreted. It localises to the target cell membrane. In terms of biological role, neurotoxin that causes irreversible rapid flaccid paralysis in blowflies and honeybees upon intrathoracic injection. Causes a quick and irreversible cytolytic effect (at 10 uM) indicating it possibly acts as a pore-forming peptide. Shows only weak effect on aphids (A.pisum) at high doses 24 hours post intrathoracic injection. In vitro, is not cytotoxic on the dipteran S2 Drosophila embryonic cell line. The polypeptide is U11-myrmicitoxin-Tb1a (Tetramorium bicarinatum (Tramp ant)).